The chain runs to 102 residues: Thioredoxin (102 aa).

The Thioredoxin domain maps to 2–102 (LHIDELTFEN…ILIHTINKYL (101 aa)). Residues cysteine 29 and cysteine 32 each act as nucleophile in the active site. Residues cysteine 29 and cysteine 32 are joined by a disulfide bond.

Belongs to the thioredoxin family.

Its subcellular location is the plastid. The protein resides in the chloroplast. Participates in various redox reactions through the reversible oxidation of its active center dithiol to a disulfide and catalyzes dithiol-disulfide exchange reactions. This chain is Thioredoxin (trxA), found in Cyanidioschyzon merolae (strain NIES-3377 / 10D) (Unicellular red alga).